Here is a 393-residue protein sequence, read N- to C-terminus: Putative N(4)-(beta-N-acetylglucosaminyl)-L-asparaginase GM21137 (393 aa).

Residues 1–23 (MRTHLRASLWVLCLASTAFSILA) form the signal peptide. 2 disulfides stabilise this stretch: C97–C102 and C196–C212. T243 acts as the Nucleophile in catalysis. Residues 271-274 (RVGD) and 294-297 (TGDG) contribute to the substrate site. The cysteines at positions 354 and 381 are disulfide-linked.

It belongs to the Ntn-hydrolase family. Heterotetramer of two alpha and two beta chains arranged as a dimer of alpha/beta heterodimers. Cleaved into an alpha and beta chain by autocatalysis; this activates the enzyme. The N-terminal residue of the beta subunit is responsible for the nucleophile hydrolase activity.

It catalyses the reaction N(4)-(beta-N-acetyl-D-glucosaminyl)-L-asparagine + H2O = N-acetyl-beta-D-glucosaminylamine + L-aspartate + H(+). In terms of biological role, cleaves the GlcNAc-Asn bond which joins oligosaccharides to the peptide of asparagine-linked glycoproteins. The polypeptide is Putative N(4)-(beta-N-acetylglucosaminyl)-L-asparaginase GM21137 (Drosophila sechellia (Fruit fly)).